Consider the following 312-residue polypeptide: MLQYQIDRIDHQISDDRSQTGTFLIGPLERGQATTLGNSLRRVLMGGLEGSAVTAVRISGINHEYATIPGVREDVLDILLNCKQLSINSSNPETEIGRLVVNGPMEVKANDIQFSSQVEIVDGEKPIATIQEGHNLELEIHVERGVGYRPVDRRNQETTAIDLLQIDAVFMPVKRVNFTIDETAVAEGATGRERLTMEVVTDGSTSPDDAIAEAANQLIELFQPLATVTMVEEIPEEPEPSPEAQIPLEELNLSVRAYNCLKRAQVNSVSDLMGFSYEDLLEIKNFGSKSADEVIEALERIGISIPQSRTSV.

Residues Met1–Thr229 form an alpha N-terminal domain (alpha-NTD) region. The interval Ile246 to Val312 is alpha C-terminal domain (alpha-CTD).

This sequence belongs to the RNA polymerase alpha chain family. In cyanobacteria the RNAP catalytic core is composed of 2 alpha, 1 beta, 1 beta', 1 gamma and 1 omega subunit. When a sigma factor is associated with the core the holoenzyme is formed, which can initiate transcription.

It catalyses the reaction RNA(n) + a ribonucleoside 5'-triphosphate = RNA(n+1) + diphosphate. Its function is as follows. DNA-dependent RNA polymerase catalyzes the transcription of DNA into RNA using the four ribonucleoside triphosphates as substrates. In Prochlorococcus marinus subsp. pastoris (strain CCMP1986 / NIES-2087 / MED4), this protein is DNA-directed RNA polymerase subunit alpha.